A 185-amino-acid chain; its full sequence is Ribosome-recycling factor (185 aa).

It belongs to the RRF family.

The protein resides in the cytoplasm. Functionally, responsible for the release of ribosomes from messenger RNA at the termination of protein biosynthesis. May increase the efficiency of translation by recycling ribosomes from one round of translation to another. The sequence is that of Ribosome-recycling factor from Corynebacterium diphtheriae (strain ATCC 700971 / NCTC 13129 / Biotype gravis).